The chain runs to 635 residues: Chaperone protein DnaK (635 aa).

The residue at position 198 (T198) is a Phosphothreonine; by autocatalysis. A disordered region spans residues 598–635 (YAKAQPGEEQAGGAPHEGEAKDEKVVDADFEEVKEDKK). The segment covering 613–624 (HEGEAKDEKVVD) has biased composition (basic and acidic residues). The span at 625 to 635 (ADFEEVKEDKK) shows a compositional bias: acidic residues.

Belongs to the heat shock protein 70 family.

In terms of biological role, acts as a chaperone. The sequence is that of Chaperone protein DnaK from Geotalea uraniireducens (strain Rf4) (Geobacter uraniireducens).